The chain runs to 326 residues: Thrombopoietin (326 aa).

The signal sequence occupies residues 1-21 (MELTDLLLVAILLLTARLTLS). Cystine bridges form between cysteine 28/cysteine 172 and cysteine 50/cysteine 106. 5 N-linked (GlcNAc...) asparagine glycosylation sites follow: asparagine 197, asparagine 206, asparagine 235, asparagine 249, and asparagine 256. The interval 307 to 326 (FPPSPTFPTPGSPPQLPPVS) is disordered. Positions 308 to 326 (PPSPTFPTPGSPPQLPPVS) are enriched in pro residues.

This sequence belongs to the EPO/TPO family.

Its subcellular location is the secreted. Lineage-specific cytokine affecting the proliferation and maturation of megakaryocytes from their committed progenitor cells. It acts at a late stage of megakaryocyte development. It may be the major physiological regulator of circulating platelets. The chain is Thrombopoietin (Thpo) from Rattus norvegicus (Rat).